A 198-amino-acid chain; its full sequence is NADH-quinone oxidoreductase subunit C (198 aa).

Belongs to the complex I 30 kDa subunit family. In terms of assembly, NDH-1 is composed of 14 different subunits. Subunits NuoB, C, D, E, F, and G constitute the peripheral sector of the complex.

Its subcellular location is the cell inner membrane. The catalysed reaction is a quinone + NADH + 5 H(+)(in) = a quinol + NAD(+) + 4 H(+)(out). Functionally, NDH-1 shuttles electrons from NADH, via FMN and iron-sulfur (Fe-S) centers, to quinones in the respiratory chain. The immediate electron acceptor for the enzyme in this species is believed to be ubiquinone. Couples the redox reaction to proton translocation (for every two electrons transferred, four hydrogen ions are translocated across the cytoplasmic membrane), and thus conserves the redox energy in a proton gradient. This is NADH-quinone oxidoreductase subunit C from Herminiimonas arsenicoxydans.